Reading from the N-terminus, the 362-residue chain is MEKIIIKLEKRSYPIIIADKLFNDFLPFWPLNIDDKVVLITNDRVAPIYLNILRNLLIRSGIVTDQLILPDGEQNKSLITLDTIFTKLLKKNYDRSTILIGLGGGVIGDITGFAAATYQRGIRFIQVPTTLLAQVDASIGGKTGINHILGKNMIGAFHQPIAVIINLDVLHTLSMKEFSSGLAEIIKYAIALDSSFFGWLESHLDDLLILHLPSLMYCIRRCCELKASIIAIDERDQGIRSVLNLGHTYGHAIESYLGYSQWSHGESIAAGIMMAVNTALRLNQFNCSDAKRIKLLLTRAGLPVRGPKEMTSKNYLEYMKRDKKSISGQLNLVLPTSTIGNVKTVFNVNHELVSLSIEDTNN.

NAD(+) is bound by residues 71–76, 105–109, 129–130, Lys142, and Lys151; these read DGEQNK, GVIGD, and TT. The Zn(2+) site is built by Glu184, His247, and His264.

It belongs to the sugar phosphate cyclases superfamily. Dehydroquinate synthase family. The cofactor is Co(2+). Zn(2+) is required as a cofactor. Requires NAD(+) as cofactor.

It localises to the cytoplasm. It catalyses the reaction 7-phospho-2-dehydro-3-deoxy-D-arabino-heptonate = 3-dehydroquinate + phosphate. It participates in metabolic intermediate biosynthesis; chorismate biosynthesis; chorismate from D-erythrose 4-phosphate and phosphoenolpyruvate: step 2/7. In terms of biological role, catalyzes the conversion of 3-deoxy-D-arabino-heptulosonate 7-phosphate (DAHP) to dehydroquinate (DHQ). The sequence is that of 3-dehydroquinate synthase from Blochmanniella pennsylvanica (strain BPEN).